We begin with the raw amino-acid sequence, 137 residues long: Large ribosomal subunit protein uL16 (137 aa).

Belongs to the universal ribosomal protein uL16 family. In terms of assembly, part of the 50S ribosomal subunit.

Its function is as follows. Binds 23S rRNA and is also seen to make contacts with the A and possibly P site tRNAs. The chain is Large ribosomal subunit protein uL16 from Mycoplasma capricolum subsp. capricolum (strain California kid / ATCC 27343 / NCTC 10154).